Here is a 305-residue protein sequence, read N- to C-terminus: tRNA dimethylallyltransferase (305 aa).

14 to 21 is a binding site for ATP; sequence GPTASGKT. 16-21 provides a ligand contact to substrate; it reads TASGKT. 3 interaction with substrate tRNA regions span residues 39–42, 163–167, and 243–248; these read DSAL, QRIIR, and RCVGYR.

It belongs to the IPP transferase family. As to quaternary structure, monomer. Requires Mg(2+) as cofactor.

It catalyses the reaction adenosine(37) in tRNA + dimethylallyl diphosphate = N(6)-dimethylallyladenosine(37) in tRNA + diphosphate. In terms of biological role, catalyzes the transfer of a dimethylallyl group onto the adenine at position 37 in tRNAs that read codons beginning with uridine, leading to the formation of N6-(dimethylallyl)adenosine (i(6)A). In Vesicomyosocius okutanii subsp. Calyptogena okutanii (strain HA), this protein is tRNA dimethylallyltransferase.